A 103-amino-acid polypeptide reads, in one-letter code: Large ribosomal subunit protein bL21 (103 aa).

It belongs to the bacterial ribosomal protein bL21 family. In terms of assembly, part of the 50S ribosomal subunit. Contacts protein L20.

Functionally, this protein binds to 23S rRNA in the presence of protein L20. This is Large ribosomal subunit protein bL21 from Hamiltonella defensa subsp. Acyrthosiphon pisum (strain 5AT).